The primary structure comprises 560 residues: Putative transport protein PBPRA2420 (560 aa).

5 consecutive transmembrane segments (helical) span residues 5–25, 37–57, 66–86, 91–111, and 161–181; these read VASL…AVGL, VGNS…GFTF, FMLF…GIFF, HYLL…LAMT, and SLSV…IFLA. RCK C-terminal domains lie at 203 to 292 and 293 to 377; these read RGIG…FRNG and KEVF…IGFI. 6 helical membrane-spanning segments follow: residues 386–406, 409–429, 452–472, 477–497, 506–526, and 539–559; these read LLAF…TLAF, VAFG…LGFL, LMVF…DSFA, MVLV…YLFG, ALLF…DMIN, and AGTY…IIIM.

Belongs to the AAE transporter (TC 2.A.81) family. YbjL subfamily.

The protein resides in the cell membrane. This is Putative transport protein PBPRA2420 from Photobacterium profundum (strain SS9).